The primary structure comprises 349 residues: tRNA N6-adenosine threonylcarbamoyltransferase (349 aa).

Fe cation-binding residues include histidine 117 and histidine 121. Substrate-binding positions include 140–144 (LVSGG), aspartate 173, glycine 186, and asparagine 284. Residue aspartate 312 coordinates Fe cation.

Belongs to the KAE1 / TsaD family. The cofactor is Fe(2+).

It is found in the cytoplasm. The enzyme catalyses L-threonylcarbamoyladenylate + adenosine(37) in tRNA = N(6)-L-threonylcarbamoyladenosine(37) in tRNA + AMP + H(+). In terms of biological role, required for the formation of a threonylcarbamoyl group on adenosine at position 37 (t(6)A37) in tRNAs that read codons beginning with adenine. Is involved in the transfer of the threonylcarbamoyl moiety of threonylcarbamoyl-AMP (TC-AMP) to the N6 group of A37, together with TsaE and TsaB. TsaD likely plays a direct catalytic role in this reaction. The chain is tRNA N6-adenosine threonylcarbamoyltransferase from Psychrobacter arcticus (strain DSM 17307 / VKM B-2377 / 273-4).